A 462-amino-acid polypeptide reads, in one-letter code: 3beta-hydroxysteroid dehydrogenase/Delta(5)-Delta(4) isomerase 1 (462 aa).

Residues 51 to 56, tyrosine 220, and lysine 224 contribute to the NAD(+) site; that span reads GGAGHL. Catalysis depends on lysine 224, which acts as the Proton donor. 2 helical membrane passes run 321 to 341 and 428 to 448; these read VGTFSFWTPLNIALGFSSSMI and VAVLVLGTILIFVAVFSFTFW.

It belongs to the 3-beta-HSD family. As to expression, expressed exclusively in the neuron-like XXX(L/R) cells through all four larval stages and becomes fainter in adults.

It is found in the membrane. It catalyses the reaction a 3beta-hydroxy-Delta(5)-steroid + NAD(+) = a 3-oxo-Delta(5)-steroid + NADH + H(+). The enzyme catalyses cholesterol + NAD(+) = cholest-5-en-3-one + NADH + H(+). The catalysed reaction is a 3-oxo-Delta(5)-steroid = a 3-oxo-Delta(4)-steroid. It carries out the reaction cholest-5-en-3-one = cholest-4-en-3-one. The protein operates within steroid hormone biosynthesis; dafachronic acid biosynthesis. Hydroxysteroid dehydrogenase involved in the biosynthesis of dafrachonic acids. Catalyzes the dehydrogenation of cholesterol or its derivatives and the isomerization of the double carbon bond on the sterol ring. Modifies sterols into a Delta(4)-3-keto-sterols such as cholest-4-en-3-one, precursor of Delta(4)-dafachronic acid. Contributes to the production of Delta(7)-dafachronic acid in the XXX cells. Dafachronic acids act as ligands and bind directly to the nuclear hormone receptor (NHR) daf-12 suppressing dauer formation and inducing reproductive growth. Acts in parallel to AKT-1 to promote reproductive development via DAF-16/FoxO and DAF-12. The sequence is that of 3beta-hydroxysteroid dehydrogenase/Delta(5)-Delta(4) isomerase 1 from Caenorhabditis elegans.